A 310-amino-acid chain; its full sequence is uncharacterized protein (310 aa).

The segment covering methionine 1–arginine 11 has biased composition (basic residues). Disordered regions lie at residues methionine 1–alanine 227 and alanine 242–glutamate 310. The segment covering methionine 12–proline 50 has biased composition (polar residues). Basic and acidic residues predominate over residues serine 51 to glutamate 80. Positions proline 91–serine 105 are enriched in acidic residues. Over residues threonine 110–leucine 121 the composition is skewed to low complexity. Basic and acidic residues-rich tracts occupy residues valine 126–proline 150 and leucine 182–proline 195. The segment covering alanine 242–glutamate 253 has biased composition (acidic residues). Positions asparagine 254–leucine 265 are enriched in basic and acidic residues. At serine 285 the chain carries Phosphoserine. The span at aspartate 297 to glutamate 310 shows a compositional bias: polar residues.

This is an uncharacterized protein from Schizosaccharomyces pombe (strain 972 / ATCC 24843) (Fission yeast).